Reading from the N-terminus, the 113-residue chain is Large ribosomal subunit protein bL17 (113 aa).

Belongs to the bacterial ribosomal protein bL17 family. As to quaternary structure, part of the 50S ribosomal subunit. Contacts protein L32.

The polypeptide is Large ribosomal subunit protein bL17 (Clostridium kluyveri (strain NBRC 12016)).